Consider the following 356-residue polypeptide: Alanine racemase (356 aa).

Residue Lys-35 is the Proton acceptor; specific for D-alanine of the active site. Lys-35 carries the N6-(pyridoxal phosphate)lysine modification. Arg-130 contacts substrate. Catalysis depends on Tyr-253, which acts as the Proton acceptor; specific for L-alanine. Residue Met-301 participates in substrate binding.

The protein belongs to the alanine racemase family. Requires pyridoxal 5'-phosphate as cofactor.

It carries out the reaction L-alanine = D-alanine. Its pathway is amino-acid biosynthesis; D-alanine biosynthesis; D-alanine from L-alanine: step 1/1. Its function is as follows. Catalyzes the interconversion of L-alanine and D-alanine. May also act on other amino acids. This is Alanine racemase (alr) from Erwinia tasmaniensis (strain DSM 17950 / CFBP 7177 / CIP 109463 / NCPPB 4357 / Et1/99).